Reading from the N-terminus, the 464-residue chain is ATP synthase subunit beta (464 aa).

Position 152–159 (152–159) interacts with ATP; it reads GGAGVGKT.

It belongs to the ATPase alpha/beta chains family. As to quaternary structure, F-type ATPases have 2 components, CF(1) - the catalytic core - and CF(0) - the membrane proton channel. CF(1) has five subunits: alpha(3), beta(3), gamma(1), delta(1), epsilon(1). CF(0) has three main subunits: a(1), b(2) and c(9-12). The alpha and beta chains form an alternating ring which encloses part of the gamma chain. CF(1) is attached to CF(0) by a central stalk formed by the gamma and epsilon chains, while a peripheral stalk is formed by the delta and b chains.

It is found in the cell membrane. The catalysed reaction is ATP + H2O + 4 H(+)(in) = ADP + phosphate + 5 H(+)(out). In terms of biological role, produces ATP from ADP in the presence of a proton gradient across the membrane. The catalytic sites are hosted primarily by the beta subunits. This is ATP synthase subunit beta from Ureaplasma parvum serovar 3 (strain ATCC 27815 / 27 / NCTC 11736).